The primary structure comprises 338 residues: Glyceraldehyde-3-phosphate dehydrogenase 1 (338 aa).

NAD(+)-binding positions include 13-14 (TI) and glycine 111. 140–142 (SCN) contacts D-glyceraldehyde 3-phosphate. Cysteine 141 (nucleophile) is an active-site residue. Arginine 169 is a binding site for NAD(+). 195–196 (HG) provides a ligand contact to D-glyceraldehyde 3-phosphate. NAD(+) is bound at residue glutamine 300.

It belongs to the glyceraldehyde-3-phosphate dehydrogenase family. In terms of assembly, homotetramer.

It is found in the cytoplasm. The enzyme catalyses D-glyceraldehyde 3-phosphate + phosphate + NADP(+) = (2R)-3-phospho-glyceroyl phosphate + NADPH + H(+). The catalysed reaction is D-glyceraldehyde 3-phosphate + phosphate + NAD(+) = (2R)-3-phospho-glyceroyl phosphate + NADH + H(+). It functions in the pathway carbohydrate degradation; glycolysis; pyruvate from D-glyceraldehyde 3-phosphate: step 1/5. In Methanosarcina barkeri (strain Fusaro / DSM 804), this protein is Glyceraldehyde-3-phosphate dehydrogenase 1.